The sequence spans 536 residues: MAYELSTLQLSCVAFVAFMAVLVFRTRTRNLKQNVPPGPRPLPIIGNFFDLPPKGQPEYLHWFKHKDAYGPVSSINVMGTTLVIFHDKDAAHAVMGKKAQKTSARPQLNFAQLCGFENFLITHQYNDKYRLHRKMVHQEIGTKGLSAGFRPIQEQESIRFILQTFNRPDDILQHLKTLAAAIVLKITYGYSIERKGQDPLVELIEHAMENLSQAFVPLAWAVDSVPAIKYLPDWFPGMSYRKTARKWRAINEAAAELPYDFVKRQMAHKAHQPSYVSNLLEKHMIKSEDNKINVSAADEEAIKWTAVSLYAAGSDSTVAIIHSVICGLVMFPEVVTRAQEEIDRVVGSDRLPNFDDRTNLPYVDGIIKEAWRWNPVGPMGLTHKSEEDLVCGEYLIPKGSYLLPSLWWFLNDPKEYPEPRVFKPERYMEPFNHPDPSEIAFGYGRRSCAGRYFADASVYITVVQLLAVFNVRKARDDQGNEIPVTLQAIPGMVNRPAPFQFKVEPRSQHHIDLLRRIESEQIPEVSHASLLKPSTV.

A helical membrane pass occupies residues 4 to 24 (ELSTLQLSCVAFVAFMAVLVF). N-linked (GlcNAc...) asparagine glycosylation is found at Asn-210 and Asn-293. Cys-448 provides a ligand contact to heme.

The protein belongs to the cytochrome P450 family. It depends on heme as a cofactor.

The protein localises to the membrane. The catalysed reaction is (+)-exo-beta-bergamotene + 2 reduced [NADPH--hemoprotein reductase] + 3 O2 = 5-dehydro-6-demethoxyfumagillol + 2 oxidized [NADPH--hemoprotein reductase] + 3 H2O + 2 H(+). The protein operates within secondary metabolite biosynthesis; terpenoid biosynthesis. In terms of biological role, multifunctional cytochrome P450 monooxygenase; part of the gene cluster that mediates the biosynthesis of fumagillin, a meroterpenoid that has numerous biological activities including irreversible inhibition of human type 2 methionine aminopeptidase (METAP2). Within the pathway, the multifunctional cytochrome P450 monooxygenase af510 acts as a 2,4,6-trichlorophenol monooxygenase that first performs the C-H hydroxylation at the bridgehead C5 position to yield 5R-hydroxyl-beta-trans-bergamotene. Subsequently, a four electron oxidation initiated at C-9 coupled to cleavage of the cyclobutane C5-C8 bond of the bicyclo[3.1.1] core yields the epoxyketone intermediate 5-keto-cordycol. An additional epoxidation reaction also catalyzed by af510 then furnishes the characteristic bisepoxide ketone 5-keto-demethoxyfumagillol. The pathway begins with the conversion of farnesyl pyrophosphate (FPP) to beta-trans-bergamotene by the membrane-bound beta-trans-bergamotene synthase af520. The multifunctional cytochrome P450 monooxygenase af510 then converts beta-trans-bergamotene into 5-keto-demethoxyfumagillol via several oxydation steps. 5-keto-demethoxyfumagillol is then subjected to successive C-6 hydroxylation and O-methylation by the dioxygenase af480 and O-methyltransferase af390-400, respectively, to yield 5-keto-fumagillol, which is then stereoselectively reduced by the keto-reductase af490 to 5R-hydroxy-seco-sesquiterpene. The next step is the polyketide transferase af380-catalyzed transfer of a dodecapentaenoyl group synthesized by the polyketide synthase af370 onto 5R-hydroxy-seco-sesquiterpene which leads to the production of prefumagillin. Finally, oxidative cleavage by the monooxygenase af470 converts prefumagillin to fumagillin. The protein is Multifunctional cytochrome P450 monooxygenase af510 of Aspergillus fumigatus (strain ATCC MYA-4609 / CBS 101355 / FGSC A1100 / Af293) (Neosartorya fumigata).